The following is a 155-amino-acid chain: Putative pre-16S rRNA nuclease (155 aa).

Belongs to the YqgF nuclease family.

It localises to the cytoplasm. In terms of biological role, could be a nuclease involved in processing of the 5'-end of pre-16S rRNA. This is Putative pre-16S rRNA nuclease from Wolbachia pipientis wMel.